A 131-amino-acid polypeptide reads, in one-letter code: Global transcriptional regulator Spx (131 aa).

A CXXC motif is present at residues 10-13 (CTSC). Cys10 and Cys13 are oxidised to a cystine.

The protein belongs to the ArsC family. Spx subfamily. In terms of assembly, interacts with the C-terminal domain of the alpha subunit of the RNAP. A single Spx monomer interacts with RNAP to form the transcription activation complex. Interacts with the adapter protein SpxH/YjbH.

It localises to the cytoplasm. With respect to regulation, under non-stress conditions, Spx is degraded by ClpXP and, to a lesser extent, by ClpCP. Efficient dedradation by ClpXP requires the adapter protein SpxH/YjbH. Binding to SpxH/YjbH reduces the overall conformational flexibility of Spx and stabilizes the C-terminal ClpX recognition region of Spx. In addition, activity is modulated by the formation of a disulfide bound within the N-terminal Cys-X-X-Cys (CXXC) motif, which is required for the transcriptional activation of trxA and trxB, or for the activation of msrAB operon expression following paraquat oxidative stress. However, it seems that formation of the disulfide bound is not essential for induction of all Spx-controlled genes, as for example the case of BSH biosynthesis genes. Similarly, induction of the Spx regulon during cell wall stress is not accompanied by oxidation of the disulfide switch, but requires Spx stabilization by the anti-adapter protein SpxO/YirB. Functionally, global transcriptional regulator that plays a key role in stress response and exerts either positive or negative regulation of genes. Acts by interacting with the C-terminal domain of the alpha subunit of the RNA polymerase (RNAP). This interaction can enhance binding of RNAP to the promoter region of target genes and stimulate their transcription, or block interaction of RNAP with activator proteins and repress transcription. Exhibits no DNA-binding activity. In terms of biological role, induces the expression of a large number of genes in response to a variety of stress conditions, such as disulfide, heat and cell wall stress, while concurrently repressing transcription of genes involved in various developmental and growth-related pathways during periods of extreme stress. Functions in the oxidative stress response via induction of the transcription of thioredoxin (trxA) and thioredoxin reductase (trxB) during thiol-specific oxidative (disulfide) stress. Mediates response to oxidative stress caused by paraquat (PQ) via induction of the methionine sulfoxide reductase genes, msrA and msrB. Also acts as a transcriptional activator of the bacillithiol (BSH) biosynthesis genes in response to oxidizing conditions and thio-reactive compounds. Involved in heat stress response and thermotolerance development, which results in diminished cellular protein aggregates. Plays an important adaptive role in the cell wall stress response. Participates in sulfate-dependent control of organosulfur metabolism. Negatively controls, via CymR, the expression of the organosulfur utilization operons ytmI, yxeI and ssu, and directly activates yrrT operon expression during growth in medium containing methionine as sole sulfur source. Negatively affects competence and sporulation. Inhibits biofilm formation in response to disulfide stress by repressing biofilm matrix genes. This chain is Global transcriptional regulator Spx, found in Bacillus subtilis (strain 168).